Here is a 368-residue protein sequence, read N- to C-terminus: 3-isopropylmalate dehydrogenase (368 aa).

G80–E93 lines the NAD(+) pocket. Substrate-binding residues include R100, R110, R138, and D229. D229, D253, and D257 together coordinate Mg(2+). G292 to N304 is an NAD(+) binding site.

The protein belongs to the isocitrate and isopropylmalate dehydrogenases family. LeuB type 1 subfamily. Homodimer. Mg(2+) serves as cofactor. It depends on Mn(2+) as a cofactor.

It localises to the cytoplasm. The enzyme catalyses (2R,3S)-3-isopropylmalate + NAD(+) = 4-methyl-2-oxopentanoate + CO2 + NADH. The protein operates within amino-acid biosynthesis; L-leucine biosynthesis; L-leucine from 3-methyl-2-oxobutanoate: step 3/4. Its function is as follows. Catalyzes the oxidation of 3-carboxy-2-hydroxy-4-methylpentanoate (3-isopropylmalate) to 3-carboxy-4-methyl-2-oxopentanoate. The product decarboxylates to 4-methyl-2 oxopentanoate. The protein is 3-isopropylmalate dehydrogenase of Pelagibacter ubique (strain HTCC1062).